The following is a 471-amino-acid chain: Probable pyruvate, phosphate dikinase regulatory protein, chloroplastic (471 aa).

The N-terminal 49 residues, 1 to 49, are a transit peptide targeting the chloroplast; that stretch reads MSSSSSTSPRFGSMISAKLASPPPSLLLPPSPRLQGRRLTPPSCTPGTP. Residues 1–133 are disordered; that stretch reads MSSSSSTSPR…PHPSSDEAAS (133 aa). Residues 21 to 32 are compositionally biased toward pro residues; it reads SPPPSLLLPPSP. Over residues 71 to 88 the composition is skewed to polar residues; that stretch reads GSATTPRSPAQLGSSQLH. Positions 89–99 are enriched in basic residues; sequence RWSRARAHRSG. A compositionally biased stretch (basic and acidic residues) spans 100 to 111; it reads RRLEWPTIRDRG. 171–178 contacts ADP; sequence HSVNAALG.

Belongs to the pyruvate, phosphate/water dikinase regulatory protein family. PDRP subfamily.

The protein localises to the plastid. Its subcellular location is the chloroplast. The enzyme catalyses N(tele)-phospho-L-histidyl/L-threonyl-[pyruvate, phosphate dikinase] + ADP = N(tele)-phospho-L-histidyl/O-phospho-L-threonyl-[pyruvate, phosphate dikinase] + AMP + H(+). It catalyses the reaction N(tele)-phospho-L-histidyl/O-phospho-L-threonyl-[pyruvate, phosphate dikinase] + phosphate + H(+) = N(tele)-phospho-L-histidyl/L-threonyl-[pyruvate, phosphate dikinase] + diphosphate. Regulated by light/dark exposure. Its function is as follows. Bifunctional serine/threonine kinase and phosphorylase involved in the dark/light-mediated regulation of PPDK by catalyzing its phosphorylation/dephosphorylation. Dark/light-induced changes in stromal concentrations of the competing ADP and Pi substrates govern the direction of the reaction. In the dark, phosphorylates the catalytic intermediate of PPDK (PPDK-HisP), inactivating it. Light exposure induces the phosphorolysis reaction that reactivates PPDK. This is Probable pyruvate, phosphate dikinase regulatory protein, chloroplastic (PDRP1) from Oryza sativa subsp. indica (Rice).